Reading from the N-terminus, the 478-residue chain is Protein nucleotidyltransferase YdiU (478 aa).

Gly84, Gly86, Arg87, Lys107, Asp119, Gly120, Arg170, and Arg177 together coordinate ATP. The active-site Proton acceptor is Asp246. Asn247 and Asp256 together coordinate Mg(2+). ATP is bound at residue Asp256.

The protein belongs to the SELO family. Mg(2+) is required as a cofactor. Requires Mn(2+) as cofactor.

It catalyses the reaction L-seryl-[protein] + ATP = 3-O-(5'-adenylyl)-L-seryl-[protein] + diphosphate. The enzyme catalyses L-threonyl-[protein] + ATP = 3-O-(5'-adenylyl)-L-threonyl-[protein] + diphosphate. It carries out the reaction L-tyrosyl-[protein] + ATP = O-(5'-adenylyl)-L-tyrosyl-[protein] + diphosphate. The catalysed reaction is L-histidyl-[protein] + UTP = N(tele)-(5'-uridylyl)-L-histidyl-[protein] + diphosphate. It catalyses the reaction L-seryl-[protein] + UTP = O-(5'-uridylyl)-L-seryl-[protein] + diphosphate. The enzyme catalyses L-tyrosyl-[protein] + UTP = O-(5'-uridylyl)-L-tyrosyl-[protein] + diphosphate. Nucleotidyltransferase involved in the post-translational modification of proteins. It can catalyze the addition of adenosine monophosphate (AMP) or uridine monophosphate (UMP) to a protein, resulting in modifications known as AMPylation and UMPylation. This Escherichia coli O81 (strain ED1a) protein is Protein nucleotidyltransferase YdiU.